We begin with the raw amino-acid sequence, 122 residues long: Large ribosomal subunit protein uL14 (122 aa).

Belongs to the universal ribosomal protein uL14 family. In terms of assembly, part of the 50S ribosomal subunit. Forms a cluster with proteins L3 and L19. In the 70S ribosome, L14 and L19 interact and together make contacts with the 16S rRNA in bridges B5 and B8.

Functionally, binds to 23S rRNA. Forms part of two intersubunit bridges in the 70S ribosome. The chain is Large ribosomal subunit protein uL14 from Borrelia turicatae (strain 91E135).